The sequence spans 287 residues: Hydroxysteroid 11-beta-dehydrogenase 1-like protein (287 aa).

The N-terminal stretch at 1 to 15 (MKVLLLTGLGALFFA) is a signal peptide. NADP(+) is bound by residues 36–62 (GVSAGIGEELAYHYARLGSHLVLTAHT), 87–88 (DM), and 114–116 (NHL). Residue Ser-165 coordinates substrate. The active-site Proton acceptor is Tyr-178. Residues 178–182 (YSAAK) and 211–217 (GLRDRAS) each bind NADP(+). An N-linked (GlcNAc...) asparagine glycan is attached at Asn-280.

Belongs to the short-chain dehydrogenases/reductases (SDR) family.

It is found in the secreted. The enzyme catalyses cortisone + NADPH + H(+) = cortisol + NADP(+). Functionally, unidirectional NADP(+)-dependent cortisol dehydrogenase (in vitro). The sequence is that of Hydroxysteroid 11-beta-dehydrogenase 1-like protein (HSD11B1L) from Bos taurus (Bovine).